The primary structure comprises 294 residues: Homoserine kinase (294 aa).

83 to 93 lines the ATP pocket; the sequence is PLARGLGSSAS.

It belongs to the GHMP kinase family. Homoserine kinase subfamily.

It localises to the cytoplasm. The enzyme catalyses L-homoserine + ATP = O-phospho-L-homoserine + ADP + H(+). Its pathway is amino-acid biosynthesis; L-threonine biosynthesis; L-threonine from L-aspartate: step 4/5. In terms of biological role, catalyzes the ATP-dependent phosphorylation of L-homoserine to L-homoserine phosphate. In Oceanobacillus iheyensis (strain DSM 14371 / CIP 107618 / JCM 11309 / KCTC 3954 / HTE831), this protein is Homoserine kinase.